Consider the following 165-residue polypeptide: MSHIFDASVLAPHIPSNLPDNFKVRPLAKDDFSKGYVDLLSQLTSVGNLDQEAFEKRFEAMRTSVPNYHIVVIEDSNSQKVVASASLVVEMKFIHGAGSRGRVEDVVVDTEMRRQKLGAVLLKTLVSLGKSLGVYKISLECVPELLPFYSQFGFQDDCNFMTQRF.

The 144-residue stretch at 22–165 (FKVRPLAKDD…DDCNFMTQRF (144 aa)) folds into the N-acetyltransferase domain. Residues T44, 92–95 (KFIH), and 104–106 (EDV) contribute to the substrate site. 114–119 (RQKLGA) is an acetyl-CoA binding site. Residues 135 to 136 (YK) and R164 contribute to the substrate site.

The protein belongs to the acetyltransferase family. GNA1 subfamily.

The catalysed reaction is D-glucosamine 6-phosphate + acetyl-CoA = N-acetyl-D-glucosamine 6-phosphate + CoA + H(+). The protein operates within nucleotide-sugar biosynthesis; UDP-N-acetyl-alpha-D-glucosamine biosynthesis; N-acetyl-alpha-D-glucosamine 1-phosphate from alpha-D-glucosamine 6-phosphate (route I): step 1/2. In Caenorhabditis elegans, this protein is Glucosamine 6-phosphate N-acetyltransferase (gna-1).